Consider the following 377-residue polypeptide: Gap junction gamma-1 protein (377 aa).

The Cytoplasmic segment spans residues 1–18; that stretch reads MSWSFLTRLLEEINNHST. A helical membrane pass occupies residues 19–39; it reads FVGKIWLTVLIIFRIVLTAVG. Residues 40 to 75 lie on the Extracellular side of the membrane; it reads GESIYYDEQSKFTCNTHQPGCENVCYDAFAPLSHVR. The chain crosses the membrane as a helical span at residues 76–96; the sequence is FWVFQIILITTPSIMYLGFAM. The Cytoplasmic segment spans residues 97–174; that stretch reads HRIARQPDEQ…RRIKQDGLMK (78 aa). Residues 129–163 are disordered; it reads DYEEAEDNQEEDPMICEEEEPEKDSEKGDKKKHDG. A compositionally biased stretch (acidic residues) spans 131–151; the sequence is EEAEDNQEEDPMICEEEEPEK. Residues 175-197 traverse the membrane as a helical segment; that stretch reads VYVLQLLFRSVFEVGFLMGQYVL. The Extracellular portion of the chain corresponds to 198–228; sequence YGFEVIPFFVCSRNPCPHTVDCFVSRPTEKT. Residues 229 to 249 traverse the membrane as a helical segment; sequence IFLLIMYAVSALCLFLNLCEL. The Cytoplasmic portion of the chain corresponds to 250 to 377; it reads FHLGIGGIRD…GVGSREKSGL (128 aa). Disordered stretches follow at residues 266-286 and 341-377; these read KEIQ…HSVL and AHAS…KSGL. The span at 344–362 shows a compositional bias: polar residues; sequence SRSSSPEANSIAAEQNRLN.

Belongs to the connexin family. Gamma-type subfamily. A connexon is composed of a hexamer of connexins.

Its subcellular location is the cell membrane. It localises to the cell junction. It is found in the gap junction. One gap junction consists of a cluster of closely packed pairs of transmembrane channels, the connexons, through which materials of low MW diffuse from one cell to a neighboring cell. The chain is Gap junction gamma-1 protein (gjc1) from Xenopus laevis (African clawed frog).